A 275-amino-acid polypeptide reads, in one-letter code: Activator of basal transcription 1 (275 aa).

The residue at position 1 (methionine 1) is an N-acetylmethionine. 2 stretches are compositionally biased toward acidic residues: residues methionine 1 to threonine 10 and alanine 25 to aspartate 34. Residues methionine 1–serine 39 form a disordered region. Residues glycine 46 to leucine 145 form the RRM domain. Residues alanine 164–arginine 194 adopt a coiled-coil conformation. A disordered region spans residues alanine 200–serine 275. Residues proline 262–serine 275 show a composition bias toward polar residues.

This sequence belongs to the ESF2/ABP1 family. Interacts with ESF1/ABTAP. Interacts with IGHMBP2.

The protein localises to the nucleus. It is found in the nucleolus. In terms of biological role, could be a novel TATA-binding protein (TBP) which can function as a basal transcription activator. Can act as a regulator of basal transcription for class II genes. The chain is Activator of basal transcription 1 (ABT1) from Bos taurus (Bovine).